A 122-amino-acid polypeptide reads, in one-letter code: UPF0102 protein XAC0764 (122 aa).

It belongs to the UPF0102 family.

The chain is UPF0102 protein XAC0764 from Xanthomonas axonopodis pv. citri (strain 306).